A 956-amino-acid polypeptide reads, in one-letter code: Probable hypoxanthine oxidase XdhD (956 aa).

Mo-molybdopterin-binding residues include Gln-414, Phe-445, and Ala-727.

This sequence belongs to the xanthine dehydrogenase family. [2Fe-2S] cluster is required as a cofactor. Mo-molybdopterin serves as cofactor.

Probably has no xanthine dehydrogenase activity; however deletion results in increased adenine sensitivity, suggesting that this protein contributes to the conversion of adenine to guanine nucleotides during purine salvage. The polypeptide is Probable hypoxanthine oxidase XdhD (xdhD) (Escherichia coli O157:H7).